Here is a 692-residue protein sequence, read N- to C-terminus: Transcription factor steA (692 aa).

The DNA-binding element occupies 56–165 (DQLIRRFLLP…SVPHDRLFLD (110 aa)). 2 disordered regions span residues 406 to 507 (SPTY…EQSS) and 519 to 540 (LPAN…SDRY). A compositionally biased stretch (polar residues) spans 470–482 (RSVNSTYTATLPQ). 2 consecutive C2H2-type zinc fingers follow at residues 564-588 (HSCP…VRTH) and 594-616 (YPCP…RRIH). The disordered stretch occupies residues 618–665 (AQQDGQPLVHEDDLENDDNESVSHDEDESPSESVHPAVPGVHGMTSMP). A compositionally biased stretch (acidic residues) spans 629–647 (DDLENDDNESVSHDEDESP).

This sequence belongs to the STE12 transcription factor family.

It localises to the nucleus. Transcription factor involved in sexual reproduction. Required for cleistothecial development and ascosporogenesis. Not required for asexual reproduction (conidiation). May act to repress medA expression. The protein is Transcription factor steA (steA) of Emericella nidulans (strain FGSC A4 / ATCC 38163 / CBS 112.46 / NRRL 194 / M139) (Aspergillus nidulans).